A 417-amino-acid chain; its full sequence is Serine hydroxymethyltransferase (417 aa).

(6S)-5,6,7,8-tetrahydrofolate-binding positions include L121 and 125–127 (GHL). K229 carries the N6-(pyridoxal phosphate)lysine modification. (6S)-5,6,7,8-tetrahydrofolate is bound at residue 355 to 357 (SPF).

The protein belongs to the SHMT family. As to quaternary structure, homodimer. Requires pyridoxal 5'-phosphate as cofactor.

The protein localises to the cytoplasm. The catalysed reaction is (6R)-5,10-methylene-5,6,7,8-tetrahydrofolate + glycine + H2O = (6S)-5,6,7,8-tetrahydrofolate + L-serine. Its pathway is one-carbon metabolism; tetrahydrofolate interconversion. It functions in the pathway amino-acid biosynthesis; glycine biosynthesis; glycine from L-serine: step 1/1. In terms of biological role, catalyzes the reversible interconversion of serine and glycine with tetrahydrofolate (THF) serving as the one-carbon carrier. This reaction serves as the major source of one-carbon groups required for the biosynthesis of purines, thymidylate, methionine, and other important biomolecules. Also exhibits THF-independent aldolase activity toward beta-hydroxyamino acids, producing glycine and aldehydes, via a retro-aldol mechanism. In Enterobacter sp. (strain 638), this protein is Serine hydroxymethyltransferase.